The primary structure comprises 249 residues: ATP synthase subunit a, chloroplastic (249 aa).

5 helical membrane-spanning segments follow: residues 40–60 (QVLI…VLAV), 97–117 (VPFI…GALL), 136–156 (INTT…AGLS), 201–221 (LVVV…VMFL), and 222–242 (GLFT…AYIG).

The protein belongs to the ATPase A chain family. F-type ATPases have 2 components, CF(1) - the catalytic core - and CF(0) - the membrane proton channel. CF(1) has five subunits: alpha(3), beta(3), gamma(1), delta(1), epsilon(1). CF(0) has four main subunits: a, b, b' and c.

The protein localises to the plastid. The protein resides in the chloroplast thylakoid membrane. Key component of the proton channel; it plays a direct role in the translocation of protons across the membrane. This chain is ATP synthase subunit a, chloroplastic, found in Arabis hirsuta (Hairy rock-cress).